A 155-amino-acid polypeptide reads, in one-letter code: uncharacterized protein (155 aa).

Residues 1–155 (MIVKYIKGDI…IVIVDWEPLL (155 aa)) form the Macro domain.

This is an uncharacterized protein from Escherichia coli (Bacteriophage T4).